A 1248-amino-acid chain; its full sequence is Kinesin-like protein KIN-14I (1248 aa).

One can recognise a MyTH4 domain in the interval 88 to 244; that stretch reads FQKDPIPTSL…PAREEIEALL (157 aa). Residues 249-563 enclose the FERM domain; that stretch reads LTTIVFFLDE…HINDVMLRRY (315 aa). A coiled-coil region spans residues 586–659; it reads NIEIYEKRVQ…LDKLKSLCDE (74 aa). The tract at residues 675–704 is disordered; sequence ETRLKSGQGQESSNRTGVSGNHFERDTLPT. Residues 679–693 are compositionally biased toward polar residues; that stretch reads KSGQGQESSNRTGVS. A coiled-coil region spans residues 708–799; sequence VNNSIEMLAK…TRSLNVTEST (92 aa). In terms of domain architecture, Kinesin motor spans 872 to 1193; that stretch reads KIRVFCRLRP…LMYASRVRCI (322 aa). Position 953 to 960 (953 to 960) interacts with ATP; sequence GQTGSGKT. Residues 1201–1223 form a calmodulin-binding region; it reads VAPKEIMRLKKLIAYWKEQAGKR. The disordered stretch occupies residues 1220–1248; that stretch reads AGKRSEDDDLEEIQEERTPKEKADNRLTS. Basic and acidic residues predominate over residues 1234 to 1248; it reads EERTPKEKADNRLTS.

Belongs to the TRAFAC class myosin-kinesin ATPase superfamily. Kinesin family. KIN-14 subfamily. Binds microtubules via its N-terminus containing the MyTH4 domain and binds F-actin via its FERM domain. Binding to calmodulin inhibits microtubule binding activity.

The protein resides in the cytoplasm. It localises to the cytoskeleton. In terms of biological role, minus-end microtubule-dependent motor protein involved in the regulation of cell division. This is Kinesin-like protein KIN-14I from Oryza sativa subsp. japonica (Rice).